A 180-amino-acid chain; its full sequence is UPF0690 protein C1orf52 homolog (180 aa).

Disordered stretches follow at residues 1–66 and 96–180; these read MAAE…SVTR and KIWK…KKKK. Basic and acidic residues predominate over residues 48–61; it reads KQAEKRLPGPDELF. Position 65 is a phosphothreonine (Thr-65). Position 130 is a phosphotyrosine (Tyr-130). The segment covering 149 to 160 has biased composition (acidic residues); it reads EGEETVESDDDK. A Phosphoserine modification is found at Ser-156. Over residues 161 to 180 the composition is skewed to basic and acidic residues; sequence DERASKIRRVEPGEAAKKKK.

The protein belongs to the UPF0690 family.

The chain is UPF0690 protein C1orf52 homolog from Mus musculus (Mouse).